Reading from the N-terminus, the 704-residue chain is Protein NPG1 (704 aa).

TPR repeat units follow at residues 24–57 (NGICMKTTEVEAKLDEGNIQEAESSLREGLSLNF), 58–90 (EEARALLGRLEYQRGNLEGALRVFEGIDLQAAI), 177–210 (SHAVELLPALWKESGDYQEAISAYRRALLSQWNL), 309–342 (IERWNTLALSYSAAGQNSAAVNLLRKSLHKHEQP), 430–463 (PDLIFELGVQYAEQRNLKAASRYAKEFIDATGGS), 555–588 (FEVWHGLAYLYSSLSHWNDVEVCLKKAGELKQYS), 589–622 (ASMLHTEGRMWEGRKEFKPALAAFLDGLLLDGSS), and 662–695 (RKAWYYLGMVHKSDGRIADATDCFQAASMLEESD).

Interacts with calmodulin in a calcium-dependent manner. As to expression, expressed only in pollen and in pollen tubes.

Its function is as follows. Calmodulin-binding protein essential for pollen germination, but not necessary for microsporogenesis or gametogenesis. The sequence is that of Protein NPG1 from Arabidopsis thaliana (Mouse-ear cress).